A 181-amino-acid polypeptide reads, in one-letter code: Large ribosomal subunit protein uL5 (181 aa).

This sequence belongs to the universal ribosomal protein uL5 family. Part of the 50S ribosomal subunit; part of the 5S rRNA/L5/L18/L25 subcomplex. Contacts the 5S rRNA and the P site tRNA. Forms a bridge to the 30S subunit in the 70S ribosome.

This is one of the proteins that bind and probably mediate the attachment of the 5S RNA into the large ribosomal subunit, where it forms part of the central protuberance. In the 70S ribosome it contacts protein S13 of the 30S subunit (bridge B1b), connecting the 2 subunits; this bridge is implicated in subunit movement. Contacts the P site tRNA; the 5S rRNA and some of its associated proteins might help stabilize positioning of ribosome-bound tRNAs. The protein is Large ribosomal subunit protein uL5 of Onion yellows phytoplasma (strain OY-M).